Here is a 123-residue protein sequence, read N- to C-terminus: Small ribosomal subunit protein uS12 (123 aa).

The disordered stretch occupies residues 1–22 (MATINQLVRQPRKRSVEKSDVP). The residue at position 89 (Asp-89) is a 3-methylthioaspartic acid. The tract at residues 100–123 (GSLDTSGVKGRNQGRSKYGTKRPK) is disordered. Positions 111 to 123 (NQGRSKYGTKRPK) are enriched in basic residues.

It belongs to the universal ribosomal protein uS12 family. As to quaternary structure, part of the 30S ribosomal subunit. Contacts proteins S8 and S17. May interact with IF1 in the 30S initiation complex.

In terms of biological role, with S4 and S5 plays an important role in translational accuracy. Functionally, interacts with and stabilizes bases of the 16S rRNA that are involved in tRNA selection in the A site and with the mRNA backbone. Located at the interface of the 30S and 50S subunits, it traverses the body of the 30S subunit contacting proteins on the other side and probably holding the rRNA structure together. The combined cluster of proteins S8, S12 and S17 appears to hold together the shoulder and platform of the 30S subunit. The polypeptide is Small ribosomal subunit protein uS12 (Pseudomonas putida (strain GB-1)).